A 99-amino-acid polypeptide reads, in one-letter code: RNA-binding protein Hfq (99 aa).

The 62-residue stretch at 10–71 (DLFLNQLRKE…ISSILPSKPI (62 aa)) folds into the Sm domain. Positions 77 to 99 (VQNSQVQNTASQQSNNNQNQESK) are disordered.

The protein belongs to the Hfq family. As to quaternary structure, homohexamer.

Its function is as follows. RNA chaperone that binds small regulatory RNA (sRNAs) and mRNAs to facilitate mRNA translational regulation in response to envelope stress, environmental stress and changes in metabolite concentrations. Also binds with high specificity to tRNAs. This Caldicellulosiruptor saccharolyticus (strain ATCC 43494 / DSM 8903 / Tp8T 6331) protein is RNA-binding protein Hfq.